A 301-amino-acid chain; its full sequence is Immediate early response gene 5-like protein (301 aa).

It belongs to the IER family.

This is Immediate early response gene 5-like protein (ier5l) from Danio rerio (Zebrafish).